A 245-amino-acid chain; its full sequence is 3-deoxy-manno-octulosonate cytidylyltransferase (245 aa).

This sequence belongs to the KdsB family.

Its subcellular location is the cytoplasm. The catalysed reaction is 3-deoxy-alpha-D-manno-oct-2-ulosonate + CTP = CMP-3-deoxy-beta-D-manno-octulosonate + diphosphate. It functions in the pathway nucleotide-sugar biosynthesis; CMP-3-deoxy-D-manno-octulosonate biosynthesis; CMP-3-deoxy-D-manno-octulosonate from 3-deoxy-D-manno-octulosonate and CTP: step 1/1. Its pathway is bacterial outer membrane biogenesis; lipopolysaccharide biosynthesis. In terms of biological role, activates KDO (a required 8-carbon sugar) for incorporation into bacterial lipopolysaccharide in Gram-negative bacteria. This is 3-deoxy-manno-octulosonate cytidylyltransferase from Acidobacterium capsulatum (strain ATCC 51196 / DSM 11244 / BCRC 80197 / JCM 7670 / NBRC 15755 / NCIMB 13165 / 161).